Here is a 377-residue protein sequence, read N- to C-terminus: Nitric oxide reductase FlRd-NAD(+) reductase (377 aa).

It belongs to the FAD-dependent oxidoreductase family. Requires FAD as cofactor.

It localises to the cytoplasm. It catalyses the reaction 2 reduced [nitric oxide reductase rubredoxin domain] + NAD(+) + H(+) = 2 oxidized [nitric oxide reductase rubredoxin domain] + NADH. It participates in nitrogen metabolism; nitric oxide reduction. One of at least two accessory proteins for anaerobic nitric oxide (NO) reductase. Reduces the rubredoxin moiety of NO reductase. The sequence is that of Nitric oxide reductase FlRd-NAD(+) reductase from Salmonella heidelberg (strain SL476).